We begin with the raw amino-acid sequence, 323 residues long: MAVYTDITDDELAKLLADFDLGAPLSFKGIAEGVENSNFLLETEGGRFILTVYEKRVRAEDLPFFLGLMRWLSEHGFASGLPMADRGGEMLKTVRGKPCAIVSFLPGLSVRRPTVAHCREAGKGLAALHNAADGFPMRRENDLGQGAWAPMFERLKDDAERLKPGLAEVIARDVADLADRWPQGLPEGVIHADYFPDNVFFKEGVFAGAIDFYFACNDIRAYDIAVALNAWCFEADGSFNITAARALVAGYEAVRPLSEAERAALPVLAHGAALRFFLTRLHDWHATPAGALVKPKDPLEYERKLAVHRTSPDLVLFGAAAAE.

The protein belongs to the pseudomonas-type ThrB family.

The enzyme catalyses L-homoserine + ATP = O-phospho-L-homoserine + ADP + H(+). Its pathway is amino-acid biosynthesis; L-threonine biosynthesis; L-threonine from L-aspartate: step 4/5. The chain is Homoserine kinase from Phenylobacterium zucineum (strain HLK1).